The chain runs to 131 residues: C-type natriuretic peptide 2 (131 aa).

A signal peptide spans 1-22; sequence MLYPALLCAALLLIAPLGHTEG. Residues 23 to 109 constitute a propeptide that is removed on maturation; it reads RTLYPSPDAI…KRAVTDRSRR (87 aa). Cys-115 and Cys-131 are joined by a disulfide.

This sequence belongs to the natriuretic peptide family. Expressed in brain and to a low extent in atrium.

It localises to the secreted. In terms of biological role, exhibits natriuretic and vasodepressor activity. Has a cGMP-stimulating activity. In Oncorhynchus mykiss (Rainbow trout), this protein is C-type natriuretic peptide 2.